We begin with the raw amino-acid sequence, 891 residues long: MRPIDRQIYRPPDFRTTFLQTADTKDKTKLSTGAAEHTPLMKQFFAAKSDYPDLLLFFRMGDFYELFYDDARKAARLLDITLTQRGSSGGAPIPMAGVPVHAYEGYLARLVALGESVAICEQIGDPALAKGLVERKVVRIVTPGTVTDEALLDERRDTLLMAISRSKQGYGLAWADLAGGRFLVNEVDSVDALEAEIARLEPAELLVPDEDNWPEFLRGRVGVRRRPPWLFDADSGRRQLLAFFKLHDLSGFGIDDKPCATAAAGALLGYVEETQKQRLPHLTSIAMEVASEAISMNAATRRHLELDTRVDGDTRNTLLGVLDSTVTPMGGRLLRRWLHRPLRLREVLVQRHHAVGSLIDTGADTDVREAFRALGDLERILTRVALRSARPRDFSTLRDGLALLPKVRTILAPLDSPRLQTLYAELGEHDATAHLLISAVAEQPPLKFSDGGVIATGYDADLDELRRLSTNADQFLIDLEQRERASSGIATLKVGYNRVHGYYIEISKGQAEKAPLHYSRRQTLTNAERYITEELKSFEDKVLSARERSLSREKLLYEGLLDALGGELEGLKRCASALSELDVLAGFAERAQALDWSQPELESAPCLHIERGRHPVVEAVRDQPFEPNDLDLHPDRRMLVITGPNMGGKSTYMRQNALIVLLAHIGSYVPASRAVIGPIDRILTRIGAGDDLARGQSTFMVEMAETSYILHHATPQSLVLMDEIGRGTSTYDGLALADAVARHLAHTNRCYTLFATHYFELTALADASHAGGGSGIANVHLDAVEHGERLVFMHAVKDGPANRSFGLQVAALAGLPKAAVQQARRRLAELEQRGGDSHAAEMAPAALDAPQQFGLFTAPSSAAQEALQALDPDELTPKQALEALYRLKALL.

Residue 643 to 650 (GPNMGGKS) participates in ATP binding.

The protein belongs to the DNA mismatch repair MutS family.

Functionally, this protein is involved in the repair of mismatches in DNA. It is possible that it carries out the mismatch recognition step. This protein has a weak ATPase activity. This is DNA mismatch repair protein MutS from Xanthomonas campestris pv. campestris (strain ATCC 33913 / DSM 3586 / NCPPB 528 / LMG 568 / P 25).